The sequence spans 150 residues: Arginine repressor (150 aa).

This sequence belongs to the ArgR family.

It localises to the cytoplasm. It functions in the pathway amino-acid biosynthesis; L-arginine biosynthesis [regulation]. Regulates arginine biosynthesis genes. The polypeptide is Arginine repressor (Clostridium botulinum (strain ATCC 19397 / Type A)).